The chain runs to 458 residues: Cysteine--tRNA ligase (458 aa).

A Zn(2+)-binding site is contributed by Cys-33. The 'HIGH' region signature appears at 35 to 45 (PTVYDFAHIGN). Zn(2+) is bound by residues Cys-221, His-246, and Glu-250. A 'KMSKS' region motif is present at residues 279 to 283 (KMSKS). Residue Lys-282 coordinates ATP.

This sequence belongs to the class-I aminoacyl-tRNA synthetase family. In terms of assembly, monomer. Requires Zn(2+) as cofactor.

It localises to the cytoplasm. It catalyses the reaction tRNA(Cys) + L-cysteine + ATP = L-cysteinyl-tRNA(Cys) + AMP + diphosphate. The polypeptide is Cysteine--tRNA ligase (Rhizobium etli (strain ATCC 51251 / DSM 11541 / JCM 21823 / NBRC 15573 / CFN 42)).